The following is a 684-amino-acid chain: UvrABC system protein C (684 aa).

A GIY-YIG domain is found at 16–95 (TDPGVYKFRD…IKRFDPRFNV (80 aa)). One can recognise a UVR domain in the interval 208–243 (APVRKRVTQRMEEAAENLEFELAARLRDDLGAIDKL). Over residues 332 to 352 (EAAEDAKLERRGVDQESHAEP) the composition is skewed to basic and acidic residues. A disordered region spans residues 332-357 (EAAEDAKLERRGVDQESHAEPRQGNA).

Belongs to the UvrC family. Interacts with UvrB in an incision complex.

It is found in the cytoplasm. Its function is as follows. The UvrABC repair system catalyzes the recognition and processing of DNA lesions. UvrC both incises the 5' and 3' sides of the lesion. The N-terminal half is responsible for the 3' incision and the C-terminal half is responsible for the 5' incision. This is UvrABC system protein C from Corynebacterium aurimucosum (strain ATCC 700975 / DSM 44827 / CIP 107346 / CN-1) (Corynebacterium nigricans).